Here is a 331-residue protein sequence, read N- to C-terminus: ATPase GET3 (331 aa).

32–39 (KGGVGKTT) is a binding site for ATP. Asp61 is a catalytic residue. Residues Glu235 and Asn262 each coordinate ATP. Zn(2+) contacts are provided by Cys273 and Cys276.

It belongs to the arsA ATPase family. Homodimer.

It is found in the cytoplasm. It localises to the endoplasmic reticulum. In terms of biological role, ATPase required for the post-translational delivery of tail-anchored (TA) proteins to the endoplasmic reticulum. Recognizes and selectively binds the transmembrane domain of TA proteins in the cytosol. This complex then targets to the endoplasmic reticulum by membrane-bound receptors, where the tail-anchored protein is released for insertion. This process is regulated by ATP binding and hydrolysis. ATP binding drives the homodimer towards the closed dimer state, facilitating recognition of newly synthesized TA membrane proteins. ATP hydrolysis is required for insertion. Subsequently, the homodimer reverts towards the open dimer state, lowering its affinity for the membrane-bound receptor, and returning it to the cytosol to initiate a new round of targeting. This chain is ATPase GET3, found in Malassezia globosa (strain ATCC MYA-4612 / CBS 7966) (Dandruff-associated fungus).